Here is a 540-residue protein sequence, read N- to C-terminus: CTP synthase (540 aa).

Residues 1 to 266 (MAVKYIFVTG…LTPIARHLEL (266 aa)) form an amidoligase domain region. CTP is bound at residue Ser-14. Position 14 (Ser-14) interacts with UTP. ATP contacts are provided by residues 15 to 20 (SLGKGI) and Asp-72. The Mg(2+) site is built by Asp-72 and Glu-140. CTP contacts are provided by residues 147–149 (DIE), 187–192 (KTKPTQ), and Lys-223. UTP is bound by residues 187 to 192 (KTKPTQ) and Lys-223. The Glutamine amidotransferase type-1 domain maps to 291-540 (TIGFVGKYLS…VKETLAHKKT (250 aa)). Gly-351 contacts L-glutamine. Cys-378 functions as the Nucleophile; for glutamine hydrolysis in the catalytic mechanism. Residues 379 to 382 (LGMQ), Glu-402, and Arg-470 contribute to the L-glutamine site. Residues His-513 and Glu-515 contribute to the active site.

It belongs to the CTP synthase family. In terms of assembly, homotetramer.

The catalysed reaction is UTP + L-glutamine + ATP + H2O = CTP + L-glutamate + ADP + phosphate + 2 H(+). It catalyses the reaction L-glutamine + H2O = L-glutamate + NH4(+). The enzyme catalyses UTP + NH4(+) + ATP = CTP + ADP + phosphate + 2 H(+). Its pathway is pyrimidine metabolism; CTP biosynthesis via de novo pathway; CTP from UDP: step 2/2. With respect to regulation, allosterically activated by GTP, when glutamine is the substrate; GTP has no effect on the reaction when ammonia is the substrate. The allosteric effector GTP functions by stabilizing the protein conformation that binds the tetrahedral intermediate(s) formed during glutamine hydrolysis. Inhibited by the product CTP, via allosteric rather than competitive inhibition. Functionally, catalyzes the ATP-dependent amination of UTP to CTP with either L-glutamine or ammonia as the source of nitrogen. Regulates intracellular CTP levels through interactions with the four ribonucleotide triphosphates. The sequence is that of CTP synthase from Helicobacter hepaticus (strain ATCC 51449 / 3B1).